A 181-amino-acid polypeptide reads, in one-letter code: uncharacterized protein (181 aa).

Residues 1–22 (MNKKSLLVVLVIALAVVPFAAT) form the signal peptide.

This is an uncharacterized protein from Halorubrum pleomorphic virus 1 (HRPV-1).